The chain runs to 122 residues: Large ribosomal subunit protein bL12 (122 aa).

Belongs to the bacterial ribosomal protein bL12 family. In terms of assembly, homodimer. Part of the ribosomal stalk of the 50S ribosomal subunit. Forms a multimeric L10(L12)X complex, where L10 forms an elongated spine to which 2 to 4 L12 dimers bind in a sequential fashion. Binds GTP-bound translation factors.

Forms part of the ribosomal stalk which helps the ribosome interact with GTP-bound translation factors. Is thus essential for accurate translation. This is Large ribosomal subunit protein bL12 from Buchnera aphidicola subsp. Schizaphis graminum (strain Sg).